The primary structure comprises 65 residues: MARKFYVDQDECIACESCVEIAPGAFAMDPEIEKAYVKDVEGASQEEVEEAMDTCPVQCIHWEDE.

The 4Fe-4S ferredoxin-type domain occupies 3–31 (RKFYVDQDECIACESCVEIAPGAFAMDPE). [4Fe-4S] cluster-binding residues include C12, C15, C18, and C55.

Homodimer. [4Fe-4S] cluster serves as cofactor.

Ferredoxins are iron-sulfur proteins that transfer electrons in a wide variety of metabolic reactions. This is Ferredoxin-1 (fd1) from Desulfocurvibacter africanus (Desulfovibrio africanus).